The following is a 100-amino-acid chain: NADH-quinone oxidoreductase subunit K (100 aa).

A run of 3 helical transmembrane segments spans residues Leu4–Leu24, Leu28–Val48, and Ile60–Leu80.

Belongs to the complex I subunit 4L family. In terms of assembly, NDH-1 is composed of 13 different subunits. Subunits NuoA, H, J, K, L, M, N constitute the membrane sector of the complex.

Its subcellular location is the cell inner membrane. The enzyme catalyses a quinone + NADH + 5 H(+)(in) = a quinol + NAD(+) + 4 H(+)(out). Functionally, NDH-1 shuttles electrons from NADH, via FMN and iron-sulfur (Fe-S) centers, to quinones in the respiratory chain. The immediate electron acceptor for the enzyme in this species is believed to be ubiquinone. Couples the redox reaction to proton translocation (for every two electrons transferred, four hydrogen ions are translocated across the cytoplasmic membrane), and thus conserves the redox energy in a proton gradient. The chain is NADH-quinone oxidoreductase subunit K from Proteus mirabilis (strain HI4320).